Reading from the N-terminus, the 793-residue chain is Sucrose synthase (793 aa).

The tract at residues 259 to 738 is GT-B glycosyltransferase; the sequence is MILNIAIISP…AIKRVTEKYS (480 aa).

Belongs to the glycosyltransferase 1 family. In terms of assembly, homotetramer.

It catalyses the reaction an NDP-alpha-D-glucose + D-fructose = a ribonucleoside 5'-diphosphate + sucrose + H(+). Catalyzes the reversible conversion of sucrose and a nucleotide disphosphate (NDP) into fructose and NDP-glucose; although the reaction is freely reversible in vitro, the physiological reaction seems to be sucrose cleavage. Unlike characterized plant enzymes prefers ADP as a cosubstrate, whereas plants prefer UDP. Its preference for ADP over UDP suggests it may directly link sucrose and glycogen metabolism. This chain is Sucrose synthase, found in Melioribacter roseus (strain JCM 17771 / P3M-2).